The following is a 493-amino-acid chain: Cobyric acid synthase (493 aa).

In terms of domain architecture, GATase cobBQ-type spans 246-440 (PIDIAVIKMP…IHGVFDGVVF (195 aa)). Cysteine 326 acts as the Nucleophile in catalysis. Residue histidine 432 is part of the active site.

Belongs to the CobB/CobQ family. CobQ subfamily.

It functions in the pathway cofactor biosynthesis; adenosylcobalamin biosynthesis. Its function is as follows. Catalyzes amidations at positions B, D, E, and G on adenosylcobyrinic A,C-diamide. NH(2) groups are provided by glutamine, and one molecule of ATP is hydrogenolyzed for each amidation. The sequence is that of Cobyric acid synthase from Clostridium botulinum (strain Okra / Type B1).